The primary structure comprises 2216 residues: MKEHPFPYKSWILELREIKNSHYFLDSWTKFNSVGSYINIFSHQERFIKLFDPRILSILLSRNSQGSTSNRYFTIKGVILFVVAVLIYRINNRNMVEIKNIYWRGLLPIPMNSIGPRNDTLEELVGSYNINRFIVSLLYLTKGKNISESFFLNLKESTLVLPITKKCSMPESNWGSRWWRNWTGKNRDYSCKISNETVAGIEILFKEKDKKYLEFIFFYYMDDPIRKDRDWELFDRLSPSKRLNKINFYSGPLFEILVKRRIYYLMSAFREKIPIEVVKGFFKQQKVGSTIQSNDIEHVSHFFSRNKRAISLKNSAQFNMWQFRQDLLVSWGENPHESDFLRNVSRANWIWLNNVWLVNKYRFCRKVRNVSSNIKYKYDSTRSRSSFVQVTDSSQLKGSYYKSSGHFYSVISNEDSEYHTLINQREIKPLKSIFFDPSFLQTEATEIESDQLQKRPSGYSSTLFTEHEKQMINHMLPEEIEEFIGNPTRLVHSFLSDRWSELHLGSNPTERSTRDHKLLKKQQDLSFVPSRRSENKELVNILKIITYLKNTVSIHPISSDPGCDGVLKDEPDMDSSNKISVFNKNTFIYLFHLFHDWNRVGYTLNLHHDFELEERFQEKADLFTLSITEPDLVYHKGFSFSIYMDQKQKMVVFASNNIMEAVNQSRFIRNMIKIQYSTYGYIRNVLHRFFLMNRSDHNLEYEIKRDQIGKDTLNHRTIIKYMINQHLSNFKKSQNKWFNPILFFSRTERSVNRNPDAYRYKRSNGSNNFLEHLEHFVSEQKSHFKFKIVFDLIRFNQYSIDWSAFIDTKDLSKPLRFFLSKLLFFLSNSLPFFCVSFGNIPIHRSEIYIYELKDPNDQLCNQFLEPIDLKIVHLKKRKPFLLGYHGTSRKLKLLITGGRPFLFNKIPRCMIDSFHTINNRSKSFDNTDSYLSMIFHNKDNWLNLVKPFHRSSLISYFYKANRLQFLNNPHNFCFYCNTRLPFYVEKAHIHNYYFTYGQFLNILFIRNKIFSLCVDKKKHAFWGGRDTISPIESQVSKIFIPKNFPQSGDETYNLSQPFHFPSRYDPFVRLIANIYGTPLTEGQIVNLGRTYCQPLSDMNLSDSEGKNFHQYLNFNSNMGLIHTPCSDKYLPSEKRKKRSLCINKYKCVEKGQMYRTFQRKVAFSTLSKWNLFQTYMPWFLTSAGYKYINLIFLDTFSELLSILSSSKKFVSIFNNIMHGSGISWRIINKKRCLPQWNLISEISSKCLHNLLLSEETIRQNNESPLISTHLRSPNVREFLYSILFLLLVVGYLVRTHLLFVSRASSELQTEFKRVKSLMIPSSMIELRKLLNRYPTPASNSFWLKNLFIVAMEQLVYSLEEIRASGGNLLGPAYGVKSICSKNKYFNINLIDLIPNPINRIIFSRNMRHLSHTSKEIYSLIRKRKNVNGDWIDDIIESWVANSDSIDDEEREFLVQFSALTTEKRIYQILLSLTHSDHLSKNDSGYKMIEQPGAIYLRYLVDIHKKYLLNYECNTSCLVERRVFLAHSQTITYSQTSRGTNTLHFPSQGKPFSISLALSPSKGILVIGSIGTGRSFLVKYLATNSYVPFITVFLNKFLDNKPKGFLVDDNDDNDSSDDIYASDDINSDLDTELELITMMNALTMDMMLELDRFFTTLQLELAKAMSPWIIWIPNIHDLDVNESNYLSFGLLVNHLSERCSTNNIIVIASTHIPKKVDPALLAPNKLNTCIKIRRLLIPQQRKHFCTLSYTRGFHLENKIFHTNGFGSITMGSSARDLVALTNEALSISITQNKSILDTNTIRSALHRQTWDLRSGVRSFQDNGILSYQIGRAITQNVLLSNCPIDPISIYMKKKSCTCNGGDYYFYKWYFGLGTSMKKLTILLYLLSCSAGSVAQDLWSLPGPAEKNGITSYGLVENDSDLVRGLLEVEGALVGSSRTEKDCSPFDNDRVIFTLILRPEPGNPLDIIKKGSCSIFDHRFIYEKYESEFEEGYGEGALDPQQIEEDLFNHIVWAPRIWRPWGFIFYCIERPNELGFPYWSRSFRGKRIVYDKDEEGELQENDSELLKSGTVQYQTRDRSSKEQGLLKINQFIWDPADPLFFLLKDQPPGSVFSHRRFFADEEMSKGLLTSQKDPPTSIYKRWFIKNTQEQHFELLINRQRWLRTKSSLSKSNGSFRSNTLFESYQYLSTLFLSNGTLFDKMTKTLLIKRWLFPDEMQM.

Residue 1567–1574 coordinates ATP; it reads GSIGTGRS.

This sequence belongs to the Ycf2 family.

Its subcellular location is the plastid stroma. Functionally, probable ATPase of unknown function. Its presence in a non-photosynthetic plant (Epifagus virginiana) and experiments in tobacco indicate that it has an essential function which is probably not related to photosynthesis. The chain is Protein Ycf2 from Epifagus virginiana (Beechdrops).